A 78-amino-acid chain; its full sequence is Pancreatic polypeptide prohormone (78 aa).

Residues 1 to 19 (LLLSTCVALLLQPPLGALG) form the signal peptide. Tyrosine 55 is subject to Tyrosine amide.

This sequence belongs to the NPY family.

It is found in the secreted. Its function is as follows. Hormone secreted by pancreatic cells that acts as a regulator of pancreatic and gastrointestinal functions probably by signaling through the G protein-coupled receptor NPY4R2. The polypeptide is Pancreatic polypeptide prohormone (PPY) (Ovis aries (Sheep)).